A 438-amino-acid chain; its full sequence is Methionine aminopeptidase 2 (438 aa).

The segment at 1-89 (MAAQAAPAEE…LFPNKQYPKG (89 aa)) is disordered. Residues 10–20 (ELSKLSVEETK) are compositionally biased toward basic and acidic residues. Basic residues predominate over residues 51-65 (AKKKKKRKPRKKKKA). Residue His-191 coordinates substrate. Asp-211, Asp-222, and His-291 together coordinate a divalent metal cation. His-299 lines the substrate pocket. A divalent metal cation-binding residues include Glu-324 and Glu-419.

This sequence belongs to the peptidase M24A family. Methionine aminopeptidase eukaryotic type 2 subfamily. It depends on Co(2+) as a cofactor. Requires Zn(2+) as cofactor. Mn(2+) serves as cofactor. Fe(2+) is required as a cofactor.

The protein resides in the cytoplasm. It catalyses the reaction Release of N-terminal amino acids, preferentially methionine, from peptides and arylamides.. Cotranslationally removes the N-terminal methionine from nascent proteins. The N-terminal methionine is often cleaved when the second residue in the primary sequence is small and uncharged (Met-Ala-, Cys, Gly, Pro, Ser, Thr, or Val). The sequence is that of Methionine aminopeptidase 2 from Sordaria macrospora (strain ATCC MYA-333 / DSM 997 / K(L3346) / K-hell).